Here is a 153-residue protein sequence, read N- to C-terminus: MAVPGCNKDNVRAGCRKCGYPGHLTFECRNFLRVDPKRDIVLDVSSTSSEDSDEESEELNKLQALQEKRINEEEEKKKEKSREKIKLKKKRKRSNSSTTEEDSSKQKKQKYQKKEKKKEKKNKSKKGKHHKKEKKKRKKEKRSSPNRSEVTKK.

Residues 13 to 30 (AGCRKCGYPGHLTFECRN) form a CCHC-type zinc finger. The disordered stretch occupies residues 44–153 (VSSTSSEDSD…SPNRSEVTKK (110 aa)). Serine 52 bears the Phosphoserine mark. Residues 66-84 (QEKRINEEEEKKKEKSREK) show a composition bias toward basic and acidic residues. A compositionally biased stretch (basic residues) spans 85–94 (IKLKKKRKRS). Phosphoserine occurs at positions 96 and 97. The segment covering 106–141 (QKKQKYQKKEKKKEKKNKSKKGKHHKKEKKKRKKEK) has biased composition (basic residues).

As to quaternary structure, interacts with SREK1/SFRS12.

Possible splicing regulator involved in the control of cellular survival. The sequence is that of Protein SREK1IP1 (Srek1ip1) from Rattus norvegicus (Rat).